The primary structure comprises 905 residues: Protein translocase subunit SecA (905 aa).

ATP contacts are provided by residues Q87, 105-109 (GEGKT), and D509. Zn(2+) is bound by residues C890, C892, C901, and H902.

The protein belongs to the SecA family. As to quaternary structure, monomer and homodimer. Part of the essential Sec protein translocation apparatus which comprises SecA, SecYEG and auxiliary proteins SecDF-YajC and YidC. It depends on Zn(2+) as a cofactor.

Its subcellular location is the cell inner membrane. It localises to the cytoplasm. It catalyses the reaction ATP + H2O + cellular proteinSide 1 = ADP + phosphate + cellular proteinSide 2.. Part of the Sec protein translocase complex. Interacts with the SecYEG preprotein conducting channel. Has a central role in coupling the hydrolysis of ATP to the transfer of proteins into and across the cell membrane, serving both as a receptor for the preprotein-SecB complex and as an ATP-driven molecular motor driving the stepwise translocation of polypeptide chains across the membrane. This Acinetobacter baylyi (strain ATCC 33305 / BD413 / ADP1) protein is Protein translocase subunit SecA.